Here is a 510-residue protein sequence, read N- to C-terminus: Bone morphogenetic protein 6 (510 aa).

Positions 1-20 (MPGLGRRAQWLCWWWGLLCS) are cleaved as a signal peptide. The propeptide occupies 21 to 371 (CGPPPLRPPL…VSEVHVRTTR (351 aa)). Disordered regions lie at residues 87–129 (PHRP…RLKS) and 143–199 (NDDE…PLTS). Residues 106–116 (PQQQQQQQQQQ) are compositionally biased toward low complexity. 5 N-linked (GlcNAc...) asparagine glycosylation sites follow: N238, N266, N383, N401, and N451. Positions 370–402 (TRSASSRRRQQSRNRSTQSQDVSRGSGSSDYNG) are disordered. The segment covering 390–401 (DVSRGSGSSDYN) has biased composition (polar residues). Disulfide bonds link C409/C475, C438/C507, and C442/C509.

It belongs to the TGF-beta family. Interacts with SOSTDC1. Interacts (when glycosylated) with type I receptor ACVR1; the interaction may induce HAMP expression. Interacts with type II receptor ACVR2B. Interacts with Hemojuvelin/HJV. Interacts with ERFE; the interaction inhibits BMP-induced transcription of HAMP. Interacts with BMPR1A/ALK3. Forms heterodimers with BMP2 in vitro; the heterodimer then binds to its receptor BMPR1A /ALK3 and may induce HAMP expression. Expressed in the lung. Low levels seen in the kidney.

The protein resides in the secreted. In terms of biological role, growth factor of the TGF-beta superfamily that plays essential roles in many developmental processes including cartilage and bone formation. Also plays an important role in the regulation of HAMP/hepcidin expression and iron metabolism by acting as a ligand for hemojuvelin/HJV. Also acts to promote expression of HAMP, potentially via the interaction with its receptor BMPR1A/ALK3. Initiates the canonical BMP signaling cascade by associating with type I receptor ACVR1 and type II receptor ACVR2B. In turn, ACVR1 propagates signal by phosphorylating SMAD1/5/8 that travel to the nucleus and act as activators and repressors of transcription of target. Can also signal through non-canonical pathway such as TAZ-Hippo signaling cascade to modulate VEGF signaling by regulating VEGFR2 expression. This chain is Bone morphogenetic protein 6 (Bmp6), found in Mus musculus (Mouse).